Consider the following 357-residue polypeptide: Vomeronasal type-1 receptor 5 (357 aa).

Residues 1-3 (MLK) are Extracellular-facing. Residues 4–24 (LVIIENMAEIMLFSLDLLLFS) traverse the membrane as a helical segment. At 25 to 52 (TDILCFNFPSKMIKLPGFITIQIFFYPQ) the chain is on the cytoplasmic side. The chain crosses the membrane as a helical span at residues 53–73 (ASFGISANTILFLFHIFTFVF). Residues 74 to 81 (SHRSKSID) lie on the Extracellular side of the membrane. A helical membrane pass occupies residues 82–102 (MIISHLSLIHILLLFTQAILV). Residues 103–130 (SLDFFGSQNTQDDLRCKVIVFLNKVMRG) are Cytoplasmic-facing. Residues 131-151 (LSICTPCLLNVLQAIISPSIF) form a helical membrane-spanning segment. The Extracellular segment spans residues 152–163 (SLAKLKHPSASH). The helical transmembrane segment at 164–184 (ILGFFLFSWVLNMFIGVIFCC) threads the bilayer. At 185–269 (TLWLPPVKWG…PVSPVKRASQ (85 aa)) the chain is on the cytoplasmic side. Residues 270–290 (TILLLVSFVFIYWVDFMFSFS) traverse the membrane as a helical segment. Over 291 to 300 (RGVTWINDSL) the chain is Extracellular. The N-linked (GlcNAc...) asparagine glycan is linked to Asn297. The chain crosses the membrane as a helical span at residues 301 to 321 (LVWFQVIVANSYATISPLMLI). Over 322 to 357 (YADNQIFKTLQMLWFKYLSPPKLMLKFNRQCGSTKK) the chain is Cytoplasmic.

The protein belongs to the G-protein coupled receptor 1 family.

It is found in the cell membrane. Putative pheromone receptor. The sequence is that of Vomeronasal type-1 receptor 5 (VN1R5) from Gorilla gorilla gorilla (Western lowland gorilla).